A 273-amino-acid polypeptide reads, in one-letter code: Dermonecrotic toxin LdSicTox-alphaIB3av (273 aa).

The active site involves histidine 5. The Mg(2+) site is built by glutamate 25 and aspartate 27. Histidine 41 functions as the Nucleophile in the catalytic mechanism. Disulfide bonds link cysteine 45–cysteine 51 and cysteine 47–cysteine 190. Residue aspartate 85 coordinates Mg(2+).

The protein belongs to the arthropod phospholipase D family. Class II subfamily. Mg(2+) serves as cofactor. Expressed by the venom gland.

The protein resides in the secreted. The enzyme catalyses an N-(acyl)-sphingosylphosphocholine = an N-(acyl)-sphingosyl-1,3-cyclic phosphate + choline. It carries out the reaction an N-(acyl)-sphingosylphosphoethanolamine = an N-(acyl)-sphingosyl-1,3-cyclic phosphate + ethanolamine. It catalyses the reaction a 1-acyl-sn-glycero-3-phosphocholine = a 1-acyl-sn-glycero-2,3-cyclic phosphate + choline. The catalysed reaction is a 1-acyl-sn-glycero-3-phosphoethanolamine = a 1-acyl-sn-glycero-2,3-cyclic phosphate + ethanolamine. Its function is as follows. Dermonecrotic toxins cleave the phosphodiester linkage between the phosphate and headgroup of certain phospholipids (sphingolipid and lysolipid substrates), forming an alcohol (often choline) and a cyclic phosphate. This toxin acts on sphingomyelin (SM). It may also act on ceramide phosphoethanolamine (CPE), lysophosphatidylcholine (LPC) and lysophosphatidylethanolamine (LPE), but not on lysophosphatidylserine (LPS), and lysophosphatidylglycerol (LPG). It acts by transphosphatidylation, releasing exclusively cyclic phosphate products as second products. Induces dermonecrosis, hemolysis, increased vascular permeability, edema, inflammatory response, and platelet aggregation. This chain is Dermonecrotic toxin LdSicTox-alphaIB3av, found in Loxosceles deserta (Desert recluse spider).